The following is a 485-amino-acid chain: GTPase Obg (485 aa).

One can recognise an Obg domain in the interval 1 to 159 (MKFVDEVRIF…LTLRLELKLL (159 aa)). Positions 160–332 (ADVGLLGFPN…LMDSVAEVLF (173 aa)) constitute an OBG-type G domain. Residues 166–173 (GFPNAGKS), 191–195 (FTTLV), 213–216 (DIPG), 284–287 (NKLD), and 313–315 (SCA) contribute to the GTP site. Residues Ser173 and Thr193 each coordinate Mg(2+). Low complexity-rich tracts occupy residues 367–385 (AGAA…AAKK), 394–428 (RKAG…PVKK), 437–446 (RKSGTAPAKK), and 455–474 (RKSG…ATKR). Residues 367–485 (AGAAAATKSA…PARKSGGGRS (119 aa)) form a disordered region.

This sequence belongs to the TRAFAC class OBG-HflX-like GTPase superfamily. OBG GTPase family. In terms of assembly, monomer. It depends on Mg(2+) as a cofactor.

Its subcellular location is the cytoplasm. In terms of biological role, an essential GTPase which binds GTP, GDP and possibly (p)ppGpp with moderate affinity, with high nucleotide exchange rates and a fairly low GTP hydrolysis rate. Plays a role in control of the cell cycle, stress response, ribosome biogenesis and in those bacteria that undergo differentiation, in morphogenesis control. In Myxococcus xanthus (strain DK1622), this protein is GTPase Obg.